The primary structure comprises 395 residues: uncharacterized protein (395 aa).

The N-terminal stretch at 1-18 (MKHVIMLYFIAAATLFSS) is a signal peptide. Cysteine 19 is lipidated: N-palmitoyl cysteine. Cysteine 19 carries the S-diacylglycerol cysteine lipid modification.

Its subcellular location is the cell outer membrane. Its function is as follows. May be involved in ulvan degradation. Ulvan is the main polysaccharide component of the Ulvales (green seaweed) cell wall. It is composed of disaccharide building blocks comprising 3-sulfated rhamnose (Rha3S) linked to D-glucuronic acid (GlcA), L-iduronic acid (IduA), or D-xylose (Xyl). This is an uncharacterized protein from Formosa agariphila (strain DSM 15362 / KCTC 12365 / LMG 23005 / KMM 3901 / M-2Alg 35-1).